A 520-amino-acid polypeptide reads, in one-letter code: NAD(P)H-quinone oxidoreductase subunit 2 (520 aa).

14 helical membrane-spanning segments follow: residues 15-35 (ILPEGIVIVTLMGVLIVDLIL), 42-62 (WIGYLAIAGLLAAIVALYFQW), 79-99 (LSIIFRGIIALSAVVTILMSI), 106-126 (GTALAEFIAILLTATLGGMFV), 132-152 (LVMIFISLETLSISSYLLTGY), 167-187 (LLIGASSTAVFLYGVSLLYGL), 210-230 (LGAVIALVFVIAGIGFKISAA), 244-264 (PTPVIAFLSVGSKAAGFALAI), 280-300 (FVFTALAVLSMILGNVVALAQ), 306-326 (MLAYSSIAQAGFVMIGLIAGT), 334-354 (IFYLLVYLFMNLCGFTCIILF), 378-398 (LGLSISLLSLGGIPPLAGFFG), 400-420 (IYLFWAGWQAGLYWLVLLGLV), and 466-486 (VGLVLTLIATSVAGILSNPLF).

This sequence belongs to the complex I subunit 2 family. NDH-1 can be composed of about 15 different subunits; different subcomplexes with different compositions have been identified which probably have different functions.

Its subcellular location is the cellular thylakoid membrane. It catalyses the reaction a plastoquinone + NADH + (n+1) H(+)(in) = a plastoquinol + NAD(+) + n H(+)(out). The catalysed reaction is a plastoquinone + NADPH + (n+1) H(+)(in) = a plastoquinol + NADP(+) + n H(+)(out). In terms of biological role, NDH-1 shuttles electrons from an unknown electron donor, via FMN and iron-sulfur (Fe-S) centers, to quinones in the respiratory and/or the photosynthetic chain. The immediate electron acceptor for the enzyme in this species is believed to be plastoquinone. Couples the redox reaction to proton translocation, and thus conserves the redox energy in a proton gradient. Cyanobacterial NDH-1 also plays a role in inorganic carbon-concentration. This Nostoc sp. (strain PCC 7120 / SAG 25.82 / UTEX 2576) protein is NAD(P)H-quinone oxidoreductase subunit 2.